Consider the following 647-residue polypeptide: Threonine--tRNA ligase (647 aa).

Residues 1-61 enclose the TGS domain; that stretch reads MINITFPDGA…TEDGSIEIVT (61 aa). The tract at residues 242–540 is catalytic; that stretch reads DHRKLGKELD…LIENYKGAFP (299 aa). Residues cysteine 336, histidine 387, and histidine 517 each contribute to the Zn(2+) site.

This sequence belongs to the class-II aminoacyl-tRNA synthetase family. Homodimer. Requires Zn(2+) as cofactor.

Its subcellular location is the cytoplasm. The catalysed reaction is tRNA(Thr) + L-threonine + ATP = L-threonyl-tRNA(Thr) + AMP + diphosphate + H(+). In terms of biological role, catalyzes the attachment of threonine to tRNA(Thr) in a two-step reaction: L-threonine is first activated by ATP to form Thr-AMP and then transferred to the acceptor end of tRNA(Thr). Also edits incorrectly charged L-seryl-tRNA(Thr). This is Threonine--tRNA ligase from Streptococcus pneumoniae serotype 4 (strain ATCC BAA-334 / TIGR4).